Reading from the N-terminus, the 680-residue chain is DNA-directed RNA polymerase subunit beta' (680 aa).

Residues Cys-69, Cys-71, Cys-87, and Cys-90 each contribute to the Zn(2+) site. Residues Asp-489, Asp-491, and Asp-493 each coordinate Mg(2+).

The protein belongs to the RNA polymerase beta' chain family. RpoC1 subfamily. As to quaternary structure, in plastids the minimal PEP RNA polymerase catalytic core is composed of four subunits: alpha, beta, beta', and beta''. When a (nuclear-encoded) sigma factor is associated with the core the holoenzyme is formed, which can initiate transcription. Requires Mg(2+) as cofactor. Zn(2+) is required as a cofactor.

It is found in the plastid. The protein localises to the chloroplast. The enzyme catalyses RNA(n) + a ribonucleoside 5'-triphosphate = RNA(n+1) + diphosphate. DNA-dependent RNA polymerase catalyzes the transcription of DNA into RNA using the four ribonucleoside triphosphates as substrates. This Ranunculus macranthus (Large buttercup) protein is DNA-directed RNA polymerase subunit beta'.